Here is a 227-residue protein sequence, read N- to C-terminus: Cytochrome c oxidase subunit 2 (227 aa).

The Mitochondrial intermembrane segment spans residues Met-1–Ser-14. The helical transmembrane segment at Pro-15–Met-45 threads the bilayer. Over Leu-46–Gln-59 the chain is Mitochondrial matrix. A helical membrane pass occupies residues Glu-60–Met-87. The Mitochondrial intermembrane segment spans residues Asp-88–Leu-227. Positions 161, 196, 198, 200, 204, and 207 each coordinate Cu cation. A Mg(2+)-binding site is contributed by Glu-198.

This sequence belongs to the cytochrome c oxidase subunit 2 family. Component of the cytochrome c oxidase (complex IV, CIV), a multisubunit enzyme composed of 14 subunits. The complex is composed of a catalytic core of 3 subunits MT-CO1, MT-CO2 and MT-CO3, encoded in the mitochondrial DNA, and 11 supernumerary subunits COX4I, COX5A, COX5B, COX6A, COX6B, COX6C, COX7A, COX7B, COX7C, COX8 and NDUFA4, which are encoded in the nuclear genome. The complex exists as a monomer or a dimer and forms supercomplexes (SCs) in the inner mitochondrial membrane with NADH-ubiquinone oxidoreductase (complex I, CI) and ubiquinol-cytochrome c oxidoreductase (cytochrome b-c1 complex, complex III, CIII), resulting in different assemblies (supercomplex SCI(1)III(2)IV(1) and megacomplex MCI(2)III(2)IV(2)). Found in a complex with TMEM177, COA6, COX18, COX20, SCO1 and SCO2. Interacts with TMEM177 in a COX20-dependent manner. Interacts with COX20. Interacts with COX16. Cu cation serves as cofactor.

It localises to the mitochondrion inner membrane. The enzyme catalyses 4 Fe(II)-[cytochrome c] + O2 + 8 H(+)(in) = 4 Fe(III)-[cytochrome c] + 2 H2O + 4 H(+)(out). In terms of biological role, component of the cytochrome c oxidase, the last enzyme in the mitochondrial electron transport chain which drives oxidative phosphorylation. The respiratory chain contains 3 multisubunit complexes succinate dehydrogenase (complex II, CII), ubiquinol-cytochrome c oxidoreductase (cytochrome b-c1 complex, complex III, CIII) and cytochrome c oxidase (complex IV, CIV), that cooperate to transfer electrons derived from NADH and succinate to molecular oxygen, creating an electrochemical gradient over the inner membrane that drives transmembrane transport and the ATP synthase. Cytochrome c oxidase is the component of the respiratory chain that catalyzes the reduction of oxygen to water. Electrons originating from reduced cytochrome c in the intermembrane space (IMS) are transferred via the dinuclear copper A center (CU(A)) of subunit 2 and heme A of subunit 1 to the active site in subunit 1, a binuclear center (BNC) formed by heme A3 and copper B (CU(B)). The BNC reduces molecular oxygen to 2 water molecules using 4 electrons from cytochrome c in the IMS and 4 protons from the mitochondrial matrix. The protein is Cytochrome c oxidase subunit 2 (MT-CO2) of Halichoerus grypus (Gray seal).